A 610-amino-acid polypeptide reads, in one-letter code: Serine/threonine-protein kinase VRK1 (610 aa).

The Protein kinase domain maps to 32–384 (FIVGKQFATG…PRKRTTRKAV (353 aa)). Residues 38 to 46 (FATGGFGRI) and Lys61 each bind ATP. Catalysis depends on Asp167, which acts as the Proton acceptor. Disordered stretches follow at residues 317 to 476 (IQKT…NKVA), 498 to 530 (ISVASDKSPTTSTPSSSSGLRSKRKSSEDVGEG), 544 to 577 (KKAKTKSGISSATKASPTELRRVPGVRNFPKGRR), and 590 to 610 (ERLASRQTKPTFDDSSCSSEV). Residues 352–373 (AVKEESDNKDNDEVEVKPEKKA) show a composition bias toward basic and acidic residues. Residues 388-397 (NDSDDNEEQY) are compositionally biased toward acidic residues. Residues 447-458 (TTPSSAASTSRS) are compositionally biased toward low complexity. The segment covering 465–474 (LTSSTASSNK) has biased composition (polar residues). Residues 502 to 517 (SDKSPTTSTPSSSSGL) show a composition bias toward low complexity. 2 stretches are compositionally biased toward polar residues: residues 550 to 559 (SGISSATKAS) and 594 to 610 (SRQTKPTFDDSSCSSEV).

Belongs to the protein kinase superfamily. CK1 Ser/Thr protein kinase family. VRK subfamily. In terms of processing, autophosphorylates in vitro. As to expression, present in germ cells at all stages of progression from the mitotic zone to mature oocytes, but not in maturing spermatids (at the protein level). Expressed in the ventral nerve cord and vulva cells.

It localises to the nucleus. The protein localises to the cytoplasm. Its subcellular location is the cajal body. The catalysed reaction is L-seryl-[protein] + ATP = O-phospho-L-seryl-[protein] + ADP + H(+). It carries out the reaction L-threonyl-[protein] + ATP = O-phospho-L-threonyl-[protein] + ADP + H(+). Serine/threonine kinase that phosphorylates baf-1, thus regulating the association of baf-1 with chromatin and nuclear membrane proteins during nuclear envelope formation. May act through the egl-17 signaling pathway. Essential in hermaphrodites for formation of the vulva, uterus, and uterine seam cells and for development and maintenance of the somatic gonad and thus the germ line. Acts to prevent cep-1 from triggering an inappropriate cell cycle arrest, thereby promoting germ cell proliferation. Regulates anchor cell polarity and the timing of anchor cell invasion through the basement membranes separating vulval and somatic gonadal cells during the L3 larval stage. This is Serine/threonine-protein kinase VRK1 from Caenorhabditis elegans.